The following is a 270-amino-acid chain: MQLIEVSAKTGYVWFRQGIWLFRRNPLAFVTLFFTYLLAMMLVSLVPVIGAALPLLLIPGIAVGFMAACRDTIAGKQVLPTILIDGFRSYGPIVTQRLLTLGGLYIVSMAAVFACSALGDGGTLLKIMFGLGAENLGPDALESPGFKIAALIAAALYAPVAMMFWFAPVLTAWHDVPPVKALFFSVVSCWRNKGAFTVYGLLWFALALGVSFGLAALMQALGASAYALMVMMPASIVITAMLYCSFYATYRGCFGVQEPGAPKLPNTSDR.

6 helical membrane passes run 24–44 (RNPL…MLVS), 45–65 (LVPV…AVGF), 98–118 (LLTL…CSAL), 150–170 (ALIA…APVL), 198–218 (VYGL…AALM), and 226–246 (YALM…YCSF).

The protein resides in the cell inner membrane. Its function is as follows. (Microbial infection) Probably transports the toxic C-terminal region of CdiA-2 from B.pseudomallei strain 1026b across the inner membrane to the cytoplasm, where CdiA has a toxic effect. Expression in E.coli makes the bacteria sensitive to the tRNase domain of B.pseudomallei strain 1026b CdiA-2. In Burkholderia thailandensis (strain ATCC 700388 / DSM 13276 / CCUG 48851 / CIP 106301 / E264), this protein is Probable inner membrane protein BTH_II0599.